The primary structure comprises 435 residues: ATP-dependent protease ATPase subunit HslU (435 aa).

Residues Ile18, 60 to 65 (GVGKTE), Asp248, Glu313, and Arg385 contribute to the ATP site.

Belongs to the ClpX chaperone family. HslU subfamily. As to quaternary structure, a double ring-shaped homohexamer of HslV is capped on each side by a ring-shaped HslU homohexamer. The assembly of the HslU/HslV complex is dependent on binding of ATP.

The protein localises to the cytoplasm. Its function is as follows. ATPase subunit of a proteasome-like degradation complex; this subunit has chaperone activity. The binding of ATP and its subsequent hydrolysis by HslU are essential for unfolding of protein substrates subsequently hydrolyzed by HslV. HslU recognizes the N-terminal part of its protein substrates and unfolds these before they are guided to HslV for hydrolysis. This is ATP-dependent protease ATPase subunit HslU from Allorhizobium ampelinum (strain ATCC BAA-846 / DSM 112012 / S4) (Agrobacterium vitis (strain S4)).